The primary structure comprises 306 residues: Acetylglutamate kinase (306 aa).

Substrate is bound by residues 79–80, arginine 101, and asparagine 203; that span reads GG.

Belongs to the acetylglutamate kinase family. ArgB subfamily.

It localises to the cytoplasm. It catalyses the reaction N-acetyl-L-glutamate + ATP = N-acetyl-L-glutamyl 5-phosphate + ADP. The protein operates within amino-acid biosynthesis; L-arginine biosynthesis; N(2)-acetyl-L-ornithine from L-glutamate: step 2/4. Catalyzes the ATP-dependent phosphorylation of N-acetyl-L-glutamate. The protein is Acetylglutamate kinase of Polaromonas naphthalenivorans (strain CJ2).